The chain runs to 622 residues: Low affinity potassium transport system protein Kup (622 aa).

12 helical membrane passes run 9–29 (LPAI…TSPL), 49–69 (VFGF…IKYL), 103–123 (VIMG…TPAI), 137–157 (PQLD…LFMI), 165–185 (VGKL…GLGL), 213–233 (VSFI…ALYA), 247–267 (WFTV…ALLL), 276–296 (PFFL…AALA), 337–357 (IYIP…IVSF), 363–383 (LAAA…ILST), 396–416 (FVAL…TANL), and 419–439 (LLSG…VMTT).

Belongs to the HAK/KUP transporter (TC 2.A.72) family.

It localises to the cell inner membrane. The catalysed reaction is K(+)(in) + H(+)(in) = K(+)(out) + H(+)(out). Its function is as follows. Responsible for the low-affinity transport of potassium into the cell. Likely operates as a K(+):H(+) symporter. The sequence is that of Low affinity potassium transport system protein Kup from Escherichia coli O157:H7.